A 167-amino-acid polypeptide reads, in one-letter code: Translationally-controlled tumor protein homolog (167 aa).

One can recognise a TCTP domain in the interval 1 to 167 (MIIYKDIFSG…WKHGIDEEKI (167 aa)).

This sequence belongs to the TCTP family.

It is found in the cytoplasm. The protein resides in the cytoskeleton. Its function is as follows. Involved in protein synthesis. Involved in microtubule stabilization. This is Translationally-controlled tumor protein homolog from Candida glabrata (strain ATCC 2001 / BCRC 20586 / JCM 3761 / NBRC 0622 / NRRL Y-65 / CBS 138) (Yeast).